A 366-amino-acid chain; its full sequence is D-alanine--D-alanine ligase (366 aa).

Positions Lys-149–Gln-358 constitute an ATP-grasp domain. Glu-185–Glu-240 contributes to the ATP binding site. Residues Asp-311, Glu-325, and Asn-327 each coordinate Mg(2+).

Belongs to the D-alanine--D-alanine ligase family. Requires Mg(2+) as cofactor. It depends on Mn(2+) as a cofactor.

The protein resides in the cytoplasm. The catalysed reaction is 2 D-alanine + ATP = D-alanyl-D-alanine + ADP + phosphate + H(+). It functions in the pathway cell wall biogenesis; peptidoglycan biosynthesis. Its function is as follows. Cell wall formation. The chain is D-alanine--D-alanine ligase from Trichodesmium erythraeum (strain IMS101).